The chain runs to 331 residues: UPF0194 membrane protein YbhG (331 aa).

An N-terminal signal peptide occupies residues 1–19 (MKKPVVIGLVIAAIVAVIA). Residues 140-209 (RTISANDLEN…DLQDTTLIAP (70 aa)) are a coiled coil.

This sequence belongs to the UPF0194 family.

Its subcellular location is the periplasm. This chain is UPF0194 membrane protein YbhG (ybhG), found in Salmonella typhi.